Reading from the N-terminus, the 302-residue chain is 4-hydroxy-tetrahydrodipicolinate synthase (302 aa).

Thr46 lines the pyruvate pocket. The Proton donor/acceptor role is filled by Tyr134. Lys162 functions as the Schiff-base intermediate with substrate in the catalytic mechanism. Residue Val204 coordinates pyruvate.

The protein belongs to the DapA family. Homotetramer; dimer of dimers.

The protein resides in the cytoplasm. The enzyme catalyses L-aspartate 4-semialdehyde + pyruvate = (2S,4S)-4-hydroxy-2,3,4,5-tetrahydrodipicolinate + H2O + H(+). It functions in the pathway amino-acid biosynthesis; L-lysine biosynthesis via DAP pathway; (S)-tetrahydrodipicolinate from L-aspartate: step 3/4. Functionally, catalyzes the condensation of (S)-aspartate-beta-semialdehyde [(S)-ASA] and pyruvate to 4-hydroxy-tetrahydrodipicolinate (HTPA). This Xanthomonas campestris pv. campestris (strain ATCC 33913 / DSM 3586 / NCPPB 528 / LMG 568 / P 25) protein is 4-hydroxy-tetrahydrodipicolinate synthase.